The following is a 429-amino-acid chain: Glutamate-1-semialdehyde 2,1-aminomutase 1 (429 aa).

Lysine 267 carries the post-translational modification N6-(pyridoxal phosphate)lysine.

This sequence belongs to the class-III pyridoxal-phosphate-dependent aminotransferase family. HemL subfamily. Homodimer. Pyridoxal 5'-phosphate is required as a cofactor.

It is found in the cytoplasm. It catalyses the reaction (S)-4-amino-5-oxopentanoate = 5-aminolevulinate. The protein operates within porphyrin-containing compound metabolism; protoporphyrin-IX biosynthesis; 5-aminolevulinate from L-glutamyl-tRNA(Glu): step 2/2. In Bacillus velezensis (strain DSM 23117 / BGSC 10A6 / LMG 26770 / FZB42) (Bacillus amyloliquefaciens subsp. plantarum), this protein is Glutamate-1-semialdehyde 2,1-aminomutase 1.